The following is a 916-amino-acid chain: Protein translocase subunit SecA (916 aa).

Residues Q87, 105–109, and D507 each bind ATP; that span reads GEGKT. Residues C900, C902, C911, and H912 each contribute to the Zn(2+) site.

Belongs to the SecA family. As to quaternary structure, monomer and homodimer. Part of the essential Sec protein translocation apparatus which comprises SecA, SecYEG and auxiliary proteins SecDF-YajC and YidC. Zn(2+) serves as cofactor.

It is found in the cell inner membrane. The protein resides in the cytoplasm. It catalyses the reaction ATP + H2O + cellular proteinSide 1 = ADP + phosphate + cellular proteinSide 2.. Part of the Sec protein translocase complex. Interacts with the SecYEG preprotein conducting channel. Has a central role in coupling the hydrolysis of ATP to the transfer of proteins into and across the cell membrane, serving both as a receptor for the preprotein-SecB complex and as an ATP-driven molecular motor driving the stepwise translocation of polypeptide chains across the membrane. This chain is Protein translocase subunit SecA, found in Neisseria gonorrhoeae (strain NCCP11945).